The primary structure comprises 85 residues: Small ribosomal subunit protein uS17 (85 aa).

Belongs to the universal ribosomal protein uS17 family. As to quaternary structure, part of the 30S ribosomal subunit.

Functionally, one of the primary rRNA binding proteins, it binds specifically to the 5'-end of 16S ribosomal RNA. The chain is Small ribosomal subunit protein uS17 from Pseudoalteromonas translucida (strain TAC 125).